Here is a 161-residue protein sequence, read N- to C-terminus: Suppressor of kinetochore protein 1 (161 aa).

The interaction with the F-box domain of F-box proteins stretch occupies residues 102-161 (VLASNYLDIKPLLDTGCKTVANMIRGKSPEDIRKTFNIPNDFTPEEEEQIRKENEWAEDR).

It belongs to the SKP1 family. Essential component of the E3 ubiquitin ligase Skp1-Cullin-1-F-box (SCF) complex. Interacts with cul1, fbh1, mcs2, pip1, pof1, pof2, pof3, pof4, pof5, pof6, pof7, pof8, pof9, pof10, pof11, pof12, pof13, pof14, pop1, pop2 and tfb3. Forms a complex with pof6 and sip1. Component of the RAVE complex composed of rav1, rav2 and skp1.

The protein localises to the cytoplasm. It localises to the nucleus. Required for cig2 degradation in the G2 and M phases of the cell cycle. Together with pof6, essential for septum processing and cell separation. Involved in mitotic progression, essential for the execution of anaphase B; required for coordinated structural alterations of mitotic spindles and segregation of nuclear membrane structures at anaphase. Involved in the DNA damage checkpoint pathway and maintenance of genome integrity. Component of the RAVE complex which is required for stable assembly of the vacuolar ATPase complex V-ATPase. The chain is Suppressor of kinetochore protein 1 from Schizosaccharomyces pombe (strain 972 / ATCC 24843) (Fission yeast).